The following is a 116-amino-acid chain: MFSENLKKCRKQKKLTQQNMADKLGITRPAYTAYELGSREPDYKTLINISNILDVSLDYLLKGESNEKVFQDEAKKVLNDPETFLAAKDGEVTDEILQAALEIITEQLKERRKSDK.

Residues 6-60 (LKKCRKQKKLTQQNMADKLGITRPAYTAYELGSREPDYKTLINISNILDVSLDYL) form the HTH cro/C1-type domain. The H-T-H motif DNA-binding region spans 17-36 (QQNMADKLGITRPAYTAYEL).

This is an uncharacterized protein from Bacillus subtilis (strain 168).